Here is a 239-residue protein sequence, read N- to C-terminus: Phosphoribosylaminoimidazole-succinocarboxamide synthase (239 aa).

Belongs to the SAICAR synthetase family.

It carries out the reaction 5-amino-1-(5-phospho-D-ribosyl)imidazole-4-carboxylate + L-aspartate + ATP = (2S)-2-[5-amino-1-(5-phospho-beta-D-ribosyl)imidazole-4-carboxamido]succinate + ADP + phosphate + 2 H(+). It functions in the pathway purine metabolism; IMP biosynthesis via de novo pathway; 5-amino-1-(5-phospho-D-ribosyl)imidazole-4-carboxamide from 5-amino-1-(5-phospho-D-ribosyl)imidazole-4-carboxylate: step 1/2. The chain is Phosphoribosylaminoimidazole-succinocarboxamide synthase from Chlorobium luteolum (strain DSM 273 / BCRC 81028 / 2530) (Pelodictyon luteolum).